A 132-amino-acid polypeptide reads, in one-letter code: Large ribosomal subunit protein eL8 (132 aa).

The residue at position 8 (K8) is an N6-acetyllysine; alternate. Residue K8 forms a Glycyl lysine isopeptide (Lys-Gly) (interchain with G-Cter in SUMO2); alternate linkage. A Glycyl lysine isopeptide (Lys-Gly) (interchain with G-Cter in SUMO2) cross-link involves residue K36. K128 carries the post-translational modification N6-acetyllysine.

The protein belongs to the eukaryotic ribosomal protein eL8 family. In terms of assembly, component of the large ribosomal subunit. Interacts with CRY1. Interacts with DICER1, AGO2, TARBP2, MOV10 and EIF6; they form a large RNA-induced silencing complex (RISC).

It localises to the cytoplasm. Its function is as follows. Component of the large ribosomal subunit. The ribosome is a large ribonucleoprotein complex responsible for the synthesis of proteins in the cell. This Sus scrofa (Pig) protein is Large ribosomal subunit protein eL8 (RPL7A).